The primary structure comprises 188 residues: Deoxyuridine 5'-triphosphate nucleotidohydrolase (188 aa).

Residues 1 to 34 form a disordered region; the sequence is MGEMTSGVDGHGSTKRTTSEAQKMDFNTDRGSAI.

This sequence belongs to the dUTPase family. Mg(2+) is required as a cofactor.

It carries out the reaction dUTP + H2O = dUMP + diphosphate + H(+). Functionally, this enzyme is involved in nucleotide metabolism: it produces dUMP, the immediate precursor of thymidine nucleotides and it decreases the intracellular concentration of dUTP so that uracil cannot be incorporated into DNA. This is Deoxyuridine 5'-triphosphate nucleotidohydrolase (49) from Ictaluridae (bullhead catfishes).